Consider the following 207-residue polypeptide: Fibronectin type III domain-containing protein 5b (207 aa).

The first 26 residues, 1–26 (MWGIKGSFAVLLLLFLAYIFASSVNA), serve as a signal peptide directing secretion. Residues 27–146 (DSLSAPLNVT…EEVGQAAQLR (120 aa)) are Extracellular-facing. Residues 31-122 (APLNVTIKAL…EPVLFRTPKE (92 aa)) form the Fibronectin type-III domain. N-linked (GlcNAc...) asparagine glycosylation is found at N34 and N79. The helical transmembrane segment at 147–167 (AGELIIIVVVLVMWAGVIALF) threads the bilayer. The Cytoplasmic portion of the chain corresponds to 168 to 207 (CRQYDIIKDNEPNNNKDKAKNSSECSTPEHPTGGLLRSKV). A compositionally biased stretch (basic and acidic residues) spans 178 to 188 (EPNNNKDKAKN). The disordered stretch occupies residues 178–207 (EPNNNKDKAKNSSECSTPEHPTGGLLRSKV). A Microbody targeting signal motif is present at residues 205–207 (SKV).

In terms of assembly, dimer; may exist in other oligomeric forms. Post-translationally, the extracellular domain is cleaved and released from the cell membrane.

The protein resides in the cell membrane. It is found in the peroxisome membrane. The protein localises to the secreted. Its function is as follows. May mediate beneficial effects of muscular exercise. This Danio rerio (Zebrafish) protein is Fibronectin type III domain-containing protein 5b (fndc5b).